A 336-amino-acid chain; its full sequence is Dihydroorotate dehydrogenase (quinone) (336 aa).

FMN is bound by residues 62 to 66 (AGLDK) and T86. A substrate-binding site is contributed by K66. Residue 111–115 (NRMGF) participates in substrate binding. FMN is bound by residues N139 and N172. N172 contacts substrate. The Nucleophile role is filled by S175. Residue N177 coordinates substrate. K217 and T245 together coordinate FMN. 246-247 (NT) is a substrate binding site. Residues G268, G297, and 318–319 (YS) contribute to the FMN site.

The protein belongs to the dihydroorotate dehydrogenase family. Type 2 subfamily. Monomer. FMN serves as cofactor.

The protein resides in the cell membrane. The catalysed reaction is (S)-dihydroorotate + a quinone = orotate + a quinol. The protein operates within pyrimidine metabolism; UMP biosynthesis via de novo pathway; orotate from (S)-dihydroorotate (quinone route): step 1/1. Its function is as follows. Catalyzes the conversion of dihydroorotate to orotate with quinone as electron acceptor. The sequence is that of Dihydroorotate dehydrogenase (quinone) from Klebsiella pneumoniae (strain 342).